A 358-amino-acid polypeptide reads, in one-letter code: Type II restriction enzyme HpaII (358 aa).

Homodimer.

The catalysed reaction is Endonucleolytic cleavage of DNA to give specific double-stranded fragments with terminal 5'-phosphates.. Functionally, an E and P subtype restriction enzyme that recognizes the double-stranded sequence 5'-CCGG-3' and cleaves after C-1. The polypeptide is Type II restriction enzyme HpaII (Haemophilus parainfluenzae).